Consider the following 207-residue polypeptide: Guanylate kinase (207 aa).

The Guanylate kinase-like domain occupies 4–184 (GTLYIVSAPS…ALMDFKAIIR (181 aa)). 11–18 (APSGAGKS) contributes to the ATP binding site.

This sequence belongs to the guanylate kinase family.

The protein resides in the cytoplasm. The catalysed reaction is GMP + ATP = GDP + ADP. Its function is as follows. Essential for recycling GMP and indirectly, cGMP. In Vibrio vulnificus (strain CMCP6), this protein is Guanylate kinase.